Here is a 156-residue protein sequence, read N- to C-terminus: MPRRREVPKRDVLPDPKFGSVELSKFMNVVMIDGKKAVAERIVYGALAQVEKKTGKNPIEVFSTAIANAKPVVEVKSRRVGGANYQVPVEVRPARRLALAMRWLREAARKRGEKSMDLRLAGELLDAAEGRGGAMKKRDEVHRMAEANKAFSHFRF.

The protein belongs to the universal ribosomal protein uS7 family. Part of the 30S ribosomal subunit. Contacts proteins S9 and S11.

Functionally, one of the primary rRNA binding proteins, it binds directly to 16S rRNA where it nucleates assembly of the head domain of the 30S subunit. Is located at the subunit interface close to the decoding center, probably blocks exit of the E-site tRNA. The sequence is that of Small ribosomal subunit protein uS7 from Laribacter hongkongensis (strain HLHK9).